Here is an 872-residue protein sequence, read N- to C-terminus: Metabotropic glutamate receptor 2 (872 aa).

An N-terminal signal peptide occupies residues 1-18 (MGSLLALLALLLLWGAVA). The Extracellular portion of the chain corresponds to 19-567 (EGPAKKVLTL…QEYIRWGDAW (549 aa)). C50 and C92 form a disulfide bridge. L-glutamate is bound by residues R57, R61, S145, A166, and T168. N-linked (GlcNAc...) asparagine glycosylation is found at N203 and N286. Cystine bridges form between C234–C518, C355–C362, C400–C407, C500–C519, C504–C522, C525–C537, and C540–C553. D295 is an L-glutamate binding site. N338 carries an N-linked (GlcNAc...) asparagine glycan. K377 contributes to the L-glutamate binding site. N402 is a glycosylation site (N-linked (GlcNAc...) asparagine). The N-linked (GlcNAc...) asparagine glycan is linked to N547. A helical membrane pass occupies residues 568–590 (AVGPVTIACLGALATLFVLGVFV). The Cytoplasmic portion of the chain corresponds to 591–604 (RHNATPVVKASGRE). A helical transmembrane segment spans residues 605–625 (LCYILLGGVFLCYCMTFIFIA). Topologically, residues 626-636 (KPSTAVCTLRR) are extracellular. C632 and C721 are joined by a disulfide. Residues 637 to 655 (LGLGTAFSVCYSALLTKTN) form a helical membrane-spanning segment. The Cytoplasmic segment spans residues 656–679 (RIARIFGGAREGAQRPRFISPASQ). An important for interaction with HTR2A region spans residues 677-685 (ASQVAICLA). Residues 680-700 (VAICLALISGQLLIVVAWLVV) traverse the membrane as a helical segment. At 701–725 (EAPGTGKETAPERREVVTLRCNHRD) the chain is on the extracellular side. A helical membrane pass occupies residues 726–747 (ASMLGSLAYNVLLIALCTLYAF). Over 748 to 760 (KTRKCPENFNEAK) the chain is Cytoplasmic. Residues 761–783 (FIGFTMYTTCIIWLAFLPIFYVT) form a helical membrane-spanning segment. Topologically, residues 784–793 (SSDYRVQTTT) are extracellular. A helical membrane pass occupies residues 794–819 (MCVSVSLSGSVVLGCLFAPKLHIILF). At 820 to 872 (QPQKNVVSHRAPTSRFGSAAARASSSLGQGSGSQFVPTVCNGREVVDSTTSSL) the chain is on the cytoplasmic side.

Belongs to the G-protein coupled receptor 3 family. Forms heterodimers with GRM3 or GRM4. Interacts with TAMALIN. Interacts with HTR2A. In terms of assembly, (Microbial infection) Interacts with H5N6 virus protein HA. As to quaternary structure, (Microbial infection) Interacts with rabies virus protein G. (Microbial infection) Interacts with SARS-CoV-2 virus spike protein S. As to expression, detected in brain cortex (at protein level). Widely expressed in different regions of the adult brain as well as in fetal brain.

The protein localises to the cell membrane. The protein resides in the synapse. It localises to the cell projection. Its subcellular location is the dendrite. Functionally, dimeric G protein-coupled receptor which is activated by the excitatory neurotransmitter L-glutamate. Plays critical roles in modulating synaptic transmission and neuronal excitability. Upon activation by glutamate, inhibits presynaptic calcium channels, reducing further glutamate release and dampening excitatory signaling. Mechanistically, ligand binding causes a conformation change that triggers signaling via guanine nucleotide-binding proteins (G proteins) and modulates the activity of down-stream effectors, such as adenylate cyclase. May mediate suppression of neurotransmission or may be involved in synaptogenesis or synaptic stabilization. (Microbial infection) Plays an important role in influenza virus internalization. In terms of biological role, (Microbial infection) Acts as a host entry factor for rabies virus that hijacks the endocytosis of GRM2 to enter cells. Its function is as follows. (Microbial infection) Acts as a host entry factor for SARS-CoV-2 that hijacks the endocytosis of GRM2 to enter cells. The protein is Metabotropic glutamate receptor 2 of Homo sapiens (Human).